A 59-amino-acid chain; its full sequence is Large ribosomal subunit protein bL32 (59 aa).

It belongs to the bacterial ribosomal protein bL32 family.

This is Large ribosomal subunit protein bL32 from Thermodesulfovibrio yellowstonii (strain ATCC 51303 / DSM 11347 / YP87).